Here is a 62-residue protein sequence, read N- to C-terminus: Large ribosomal subunit protein eL24 (62 aa).

Zn(2+)-binding residues include cysteine 6, cysteine 9, cysteine 32, and cysteine 36. Residues 6–36 form a C4-type zinc finger; it reads CYFCGKMLEPGTGKLYVKKDGSTYFMCSSKC.

The protein belongs to the eukaryotic ribosomal protein eL24 family. Part of the 50S ribosomal subunit. Forms a cluster with proteins L3 and L14. It depends on Zn(2+) as a cofactor.

In terms of biological role, binds to the 23S rRNA. The chain is Large ribosomal subunit protein eL24 from Methanosarcina acetivorans (strain ATCC 35395 / DSM 2834 / JCM 12185 / C2A).